Here is a 384-residue protein sequence, read N- to C-terminus: Probable intron-encoded endonuclease Cox1-I1b (384 aa).

Belongs to the LAGLIDADG endonuclease family.

The protein localises to the mitochondrion. Its function is as follows. Probable mitochondrial DNA endonuclease involved in intron homing. The sequence is that of Probable intron-encoded endonuclease Cox1-I1b (cox1-I1b) from Schizosaccharomyces pombe (strain 972 / ATCC 24843) (Fission yeast).